The chain runs to 103 residues: Large ribosomal subunit protein bL21 (103 aa).

Belongs to the bacterial ribosomal protein bL21 family. As to quaternary structure, part of the 50S ribosomal subunit. Contacts protein L20.

In terms of biological role, this protein binds to 23S rRNA in the presence of protein L20. This Yersinia pseudotuberculosis serotype O:1b (strain IP 31758) protein is Large ribosomal subunit protein bL21.